A 416-amino-acid chain; its full sequence is Phosphoglycerate kinase (416 aa).

Positions 23, 24, 25, 26, 38, 39, 62, 63, 65, 66, 121, 122, 169, and 170 each coordinate (2R)-3-phosphoglycerate. Residue G213 coordinates ADP. G213 is a CDP binding site. 2 residues coordinate AMP: A214 and K215. A214 and K215 together coordinate ATP. A214 provides a ligand contact to Mg(2+). Residue D218 coordinates CDP. D218 contributes to the Mg(2+) binding site. K219 is an AMP binding site. K219 lines the ATP pocket. G237 provides a ligand contact to ADP. G237 provides a ligand contact to CDP. The AMP site is built by G238 and G312. 2 residues coordinate ATP: G238 and G312. CDP is bound by residues G337 and F342. F342 provides a ligand contact to ADP. E343 serves as a coordination point for AMP. D374 contacts Mg(2+). Residue T375 coordinates ATP.

This sequence belongs to the phosphoglycerate kinase family. In terms of assembly, monomer. It depends on Mg(2+) as a cofactor.

It catalyses the reaction (2R)-3-phosphoglycerate + ATP = (2R)-3-phospho-glyceroyl phosphate + ADP. The protein operates within carbohydrate degradation; glycolysis; pyruvate from D-glyceraldehyde 3-phosphate: step 2/5. The sequence is that of Phosphoglycerate kinase (PGK) from Plasmodium falciparum (isolate 3D7).